Here is a 150-residue protein sequence, read N- to C-terminus: Large ribosomal subunit protein uL15 (150 aa).

The protein belongs to the universal ribosomal protein uL15 family. In terms of assembly, part of the 50S ribosomal subunit.

Binds to the 23S rRNA. The sequence is that of Large ribosomal subunit protein uL15 from Rickettsia prowazekii (strain Madrid E).